The following is a 293-amino-acid chain: Prohibitin-2 (293 aa).

The chain crosses the membrane as a helical; Signal-anchor for type II membrane protein span at residues 21 to 41; it reads FGGGFGLLALGGVGLLALSSL. Residues 190–235 adopt a coiled-coil conformation; it reads GREYAAAIEAKQVAQQEAERARFLVEKALQDKRSIIVKAEGEAQSA.

This sequence belongs to the prohibitin family. The mitochondrial prohibitin complex consists of two subunits (PHB1 and PHB2), assembled into a membrane-associated ring-shaped supercomplex of approximately 1 mDa.

It localises to the mitochondrion inner membrane. The protein resides in the cytoplasm. The protein localises to the nucleus. Its subcellular location is the cell membrane. Protein with pleiotropic attributes mediated in a cell-compartment- and tissue-specific manner, which include the plasma membrane-associated cell signaling functions, mitochondrial chaperone, and transcriptional co-regulator of transcription factors and sex steroid hormones in the nucleus. In terms of biological role, in the mitochondria, together with PHB, forms large ring complexes (prohibitin complexes) in the inner mitochondrial membrane (IMM) and functions as a chaperone protein that stabilizes mitochondrial respiratory enzymes and maintains mitochondrial integrity in the IMM, which is required for mitochondrial morphogenesis, neuronal survival, and normal lifespan. Its function is as follows. In the nucleus, serves as transcriptional co-regulator. The chain is Prohibitin-2 (phbB) from Dictyostelium discoideum (Social amoeba).